The primary structure comprises 756 residues: Virulence factor MDV010 (756 aa).

Positions M1 to L30 are cleaved as a signal peptide. A disordered region spans residues E96–S120. Residues T100 to E113 show a composition bias toward polar residues. N-linked (GlcNAc...) asparagine; by host glycans are attached at residues N222, N241, N287, N423, N495, N542, N552, N580, N660, N684, N715, and N744.

It is found in the secreted. May play a role in host immune modulation since the protein is secreted and provides an advantage for growth in vivo while it is completely dispensable in cell culture. In Gallid herpesvirus 2 (strain Chicken/Md5/ATCC VR-987) (GaHV-2), this protein is Virulence factor MDV010 (MDV010).